We begin with the raw amino-acid sequence, 177 residues long: SAALAGTIIAGASLGFQILDKVLGELGKVSRKIAIGVDNESGGSTTALNAYFRSGTGDVILPEFVPNQKALLYSGRKDTGPVATGAVAAFAYYMSNGHTLGVMFSVPFDYNFYSNWWDVKVYSGKRRADQGMYEDMYYGNPYRGDNGWHQKNLGYGLRMKGIMTSAGEAILQIKISR.

Residues 3-12 form a plays an important role in the hemolytic activity region; it reads ALAGTIIAGA. Positions 11–30 are N-terminal region; the sequence is GASLGFQILDKVLGELGKVS. Phosphocholine-binding residues include serine 54, valine 87, serine 105, proline 107, tyrosine 133, tyrosine 137, and tyrosine 138.

Belongs to the actinoporin family. Sea anemone subfamily. In terms of assembly, octamer or nonamer in membranes. Monomer in the soluble state.

It localises to the secreted. The protein localises to the nematocyst. Its subcellular location is the target cell membrane. Functionally, pore-forming protein that forms cations-selective hydrophilic pores of around 1 nm and causes cytolysis. Pore formation is a multi-step process that involves specific recognition of membrane sphingomyelin (but neither cholesterol nor phosphatidylcholine) using aromatic rich region and adjacent phosphocholine (POC) binding site, firm binding to the membrane (mainly driven by hydrophobic interactions) accompanied by the transfer of the N-terminal region to the lipid-water interface and finally pore formation after oligomerization of monomers This toxin shows hemolytic activity. This is DELTA-stichotoxin-Hmg2b from Heteractis magnifica (Magnificent sea anemone).